Here is a 378-residue protein sequence, read N- to C-terminus: Chaperone protein DnaJ 1 (378 aa).

A J domain is found at aspartate 4 to glycine 68. The segment at glycine 129–arginine 211 adopts a CR-type zinc-finger fold. The Zn(2+) site is built by cysteine 142, cysteine 145, cysteine 159, cysteine 162, cysteine 185, cysteine 188, cysteine 199, and cysteine 202. CXXCXGXG motif repeat units lie at residues cysteine 142–glycine 149, cysteine 159–glycine 166, cysteine 185–glycine 192, and cysteine 199–glycine 206.

This sequence belongs to the DnaJ family. As to quaternary structure, homodimer. It depends on Zn(2+) as a cofactor.

It localises to the cytoplasm. In terms of biological role, participates actively in the response to hyperosmotic and heat shock by preventing the aggregation of stress-denatured proteins and by disaggregating proteins, also in an autonomous, DnaK-independent fashion. Unfolded proteins bind initially to DnaJ; upon interaction with the DnaJ-bound protein, DnaK hydrolyzes its bound ATP, resulting in the formation of a stable complex. GrpE releases ADP from DnaK; ATP binding to DnaK triggers the release of the substrate protein, thus completing the reaction cycle. Several rounds of ATP-dependent interactions between DnaJ, DnaK and GrpE are required for fully efficient folding. Also involved, together with DnaK and GrpE, in the DNA replication of plasmids through activation of initiation proteins. The polypeptide is Chaperone protein DnaJ 1 (Corynebacterium efficiens (strain DSM 44549 / YS-314 / AJ 12310 / JCM 11189 / NBRC 100395)).